The primary structure comprises 456 residues: Cysteine--tRNA ligase (456 aa).

Residue Cys28 coordinates Zn(2+). A 'HIGH' region motif is present at residues 30-40 (ITVYDHCHLGH). The Zn(2+) site is built by Cys209, His234, and Glu238. The 'KMSKS' region signature appears at 266-270 (KMAKS). Lys269 contributes to the ATP binding site.

Belongs to the class-I aminoacyl-tRNA synthetase family. In terms of assembly, monomer. Requires Zn(2+) as cofactor.

It localises to the cytoplasm. It catalyses the reaction tRNA(Cys) + L-cysteine + ATP = L-cysteinyl-tRNA(Cys) + AMP + diphosphate. In Legionella pneumophila (strain Corby), this protein is Cysteine--tRNA ligase.